The chain runs to 1106 residues: Carbamoyl phosphate synthase large chain (1106 aa).

Residues 1–402 are carboxyphosphate synthetic domain; that stretch reads MPKREDLKSV…ALQKALRSLE (402 aa). ATP is bound by residues Arg-129, Arg-169, Gly-175, Gly-176, Glu-208, Ile-210, Glu-215, Gly-241, Val-242, His-243, Gln-285, and Glu-299. Residues 133 to 328 enclose the ATP-grasp 1 domain; it reads KGVVERCGAE…IAKIATKLSL (196 aa). 3 residues coordinate Mg(2+): Gln-285, Glu-299, and Asn-301. The Mn(2+) site is built by Gln-285, Glu-299, and Asn-301. The segment at 403-546 is oligomerization domain; the sequence is QKGSQLDFGS…YHYSSYDQED (144 aa). The interval 547–956 is carbamoyl phosphate synthetic domain; that stretch reads EIALHEKPSV…AFAKSQAAAN (410 aa). Residues 677 to 868 form the ATP-grasp 2 domain; that stretch reads ARVLDIAGLI…LAKAAALIGT (192 aa). Residues Arg-713, Arg-752, Leu-754, Glu-759, Gly-784, Ile-785, His-786, Ser-787, Gln-827, and Glu-839 each coordinate ATP. 3 residues coordinate Mg(2+): Gln-827, Glu-839, and Asn-841. The Mn(2+) site is built by Gln-827, Glu-839, and Asn-841. Positions 957–1106 constitute an MGS-like domain; the sequence is NALPTEGKVF…EALLEAAANV (150 aa). The tract at residues 957 to 1106 is allosteric domain; that stretch reads NALPTEGKVF…EALLEAAANV (150 aa).

It belongs to the CarB family. As to quaternary structure, composed of two chains; the small (or glutamine) chain promotes the hydrolysis of glutamine to ammonia, which is used by the large (or ammonia) chain to synthesize carbamoyl phosphate. Tetramer of heterodimers (alpha,beta)4. Mg(2+) serves as cofactor. Requires Mn(2+) as cofactor.

It carries out the reaction hydrogencarbonate + L-glutamine + 2 ATP + H2O = carbamoyl phosphate + L-glutamate + 2 ADP + phosphate + 2 H(+). The enzyme catalyses hydrogencarbonate + NH4(+) + 2 ATP = carbamoyl phosphate + 2 ADP + phosphate + 2 H(+). Its pathway is amino-acid biosynthesis; L-arginine biosynthesis; carbamoyl phosphate from bicarbonate: step 1/1. It participates in pyrimidine metabolism; UMP biosynthesis via de novo pathway; (S)-dihydroorotate from bicarbonate: step 1/3. Its function is as follows. Large subunit of the glutamine-dependent carbamoyl phosphate synthetase (CPSase). CPSase catalyzes the formation of carbamoyl phosphate from the ammonia moiety of glutamine, carbonate, and phosphate donated by ATP, constituting the first step of 2 biosynthetic pathways, one leading to arginine and/or urea and the other to pyrimidine nucleotides. The large subunit (synthetase) binds the substrates ammonia (free or transferred from glutamine from the small subunit), hydrogencarbonate and ATP and carries out an ATP-coupled ligase reaction, activating hydrogencarbonate by forming carboxy phosphate which reacts with ammonia to form carbamoyl phosphate. This Renibacterium salmoninarum (strain ATCC 33209 / DSM 20767 / JCM 11484 / NBRC 15589 / NCIMB 2235) protein is Carbamoyl phosphate synthase large chain.